The primary structure comprises 186 residues: Interferon lambda-3 (186 aa).

The N-terminal stretch at Met1–Ala21 is a signal peptide. Cystine bridges form between Cys31–Cys128, Cys65–Cys160, and Cys178–Cys185.

It belongs to the lambda interferon family.

It localises to the secreted. Functionally, cytokine which plays a critical role in the antiviral host defense, predominantly in the epithelial tissues. Acts as a ligand for the heterodimeric class II cytokine receptor composed of IL10RB and IFNLR1, and receptor engagement leads to the activation of the JAK/STAT signaling pathway resulting in the expression of IFN-stimulated genes (ISG), which mediate the antiviral state. Has a restricted receptor distribution and therefore restricted targets: is primarily active in epithelial cells and this cell type-selective action is because of the epithelial cell-specific expression of its receptor IFNLR1. Exhibits antiviral activity against the H5N1 influenza A virus. Induces the expression of the antiviral MX protein in epithelial-rich tissues, such as intestine, trachea and lung. In Gallus gallus (Chicken), this protein is Interferon lambda-3 (IFNL3).